Reading from the N-terminus, the 297-residue chain is Nucleotide-binding protein DSY4845 (297 aa).

13 to 20 is a binding site for ATP; it reads GLSGAGKT. A GTP-binding site is contributed by 64-67; the sequence is DLRG.

It belongs to the RapZ-like family.

Displays ATPase and GTPase activities. The sequence is that of Nucleotide-binding protein DSY4845 from Desulfitobacterium hafniense (strain Y51).